The sequence spans 257 residues: LexA repressor (257 aa).

The segment at residues 64–84 is a DNA-binding region (H-T-H motif); it reads FREIGEAAGLKSPSSVKHQLQ. Catalysis depends on for autocatalytic cleavage activity residues Ser181 and Lys218.

The protein belongs to the peptidase S24 family. Homodimer.

The enzyme catalyses Hydrolysis of Ala-|-Gly bond in repressor LexA.. Functionally, represses a number of genes involved in the response to DNA damage (SOS response), including recA and lexA. In the presence of single-stranded DNA, RecA interacts with LexA causing an autocatalytic cleavage which disrupts the DNA-binding part of LexA, leading to derepression of the SOS regulon and eventually DNA repair. In Bifidobacterium adolescentis (strain ATCC 15703 / DSM 20083 / NCTC 11814 / E194a), this protein is LexA repressor.